We begin with the raw amino-acid sequence, 104 residues long: uncharacterized protein (104 aa).

The helical transmembrane segment at 80 to 98 (GSSLPLFDLVFILLSTFFL) threads the bilayer.

It is found in the membrane. This is an uncharacterized protein from Saccharomyces cerevisiae (strain ATCC 204508 / S288c) (Baker's yeast).